We begin with the raw amino-acid sequence, 288 residues long: Fatty acid-binding protein TM_1468 (288 aa).

A DegV domain is found at 3-283 (VKILVDSTAD…PGTVGFGIEV (281 aa)). Residues Thr63 and Ser96 each coordinate hexadecanoate.

Monomer.

Functionally, binds long-chain fatty acids, such as palmitate, and may play a role in lipid transport or fatty acid metabolism. This chain is Fatty acid-binding protein TM_1468, found in Thermotoga maritima (strain ATCC 43589 / DSM 3109 / JCM 10099 / NBRC 100826 / MSB8).